The following is a 325-amino-acid chain: DNA-directed RNA polymerase subunit alpha (325 aa).

The interval 1 to 231 (MQTSLLKPKI…DQLSVFAALE (231 aa)) is alpha N-terminal domain (alpha-NTD). Residues 246–325 (IDPILLRPVD…ENWPPAGLDK (80 aa)) form an alpha C-terminal domain (alpha-CTD) region.

The protein belongs to the RNA polymerase alpha chain family. Homodimer. The RNAP catalytic core consists of 2 alpha, 1 beta, 1 beta' and 1 omega subunit. When a sigma factor is associated with the core the holoenzyme is formed, which can initiate transcription.

It carries out the reaction RNA(n) + a ribonucleoside 5'-triphosphate = RNA(n+1) + diphosphate. Its function is as follows. DNA-dependent RNA polymerase catalyzes the transcription of DNA into RNA using the four ribonucleoside triphosphates as substrates. This chain is DNA-directed RNA polymerase subunit alpha, found in Paraburkholderia phymatum (strain DSM 17167 / CIP 108236 / LMG 21445 / STM815) (Burkholderia phymatum).